The chain runs to 287 residues: Inorganic pyrophosphatase (287 aa).

Arginine 79 lines the diphosphate pocket. Residues aspartate 116, aspartate 121, and aspartate 153 each coordinate Mg(2+).

It belongs to the PPase family. Mg(2+) is required as a cofactor.

The protein resides in the cytoplasm. The enzyme catalyses diphosphate + H2O = 2 phosphate + H(+). The protein is Inorganic pyrophosphatase (IPP1) of Zygosaccharomyces bailii.